A 391-amino-acid polypeptide reads, in one-letter code: Thioredoxin-interacting protein (391 aa).

A Glycyl lysine isopeptide (Lys-Gly) (interchain with G-Cter in ubiquitin) cross-link involves residue Lys212. Ser361 carries the post-translational modification Phosphoserine.

Belongs to the arrestin family. As to quaternary structure, homodimer; disulfide-linked. Interacts with TXN/thioredoxin through its redox-active site. Interacts with transcriptional repressors ZBTB16, ZBTB32 and HDAC1. Interacts with DDIT4. Post-translationally, ubiquitinated; undergoes heterotypic 'Lys-48'-/'Lys-63'-branched polyubiquitination catalyzed by ITCH and UBR5 resulting in proteasomal degradation. Deubiquitinated by USP5, leading to TXNIP stabilization.

It is found in the cytoplasm. The protein resides in the nucleus. Its function is as follows. May act as an oxidative stress mediator by inhibiting thioredoxin activity or by limiting its bioavailability. Interacts with COPS5 and restores COPS5-induced suppression of CDKN1B stability, blocking the COPS5-mediated translocation of CDKN1B from the nucleus to the cytoplasm. Functions as a transcriptional repressor, possibly by acting as a bridge molecule between transcription factors and corepressor complexes, and over-expression will induce G0/G1 cell cycle arrest. Required for the maturation of natural killer cells. Acts as a suppressor of tumor cell growth. Inhibits the proteasomal degradation of DDIT4, and thereby contributes to the inhibition of the mammalian target of rapamycin complex 1 (mTORC1). This is Thioredoxin-interacting protein (TXNIP) from Homo sapiens (Human).